The following is a 121-amino-acid chain: Putative RNase MJ0127 (121 aa).

Active-site residues include Arg76 and His81. Positions 76–83 match the RX(4)HXY motif motif; it reads RDKLIHHY. Tyr83 is modified (O-di-AMP-tyrosine).

The protein belongs to the HepT RNase toxin family. In terms of assembly, homodimer, probably forms a complex with cognate antitoxin MJ0128. Post-translationally, modified by cognate antitoxin MJ0128; probably at least 2 successive AMPylation events occur on Tyr-83.

In terms of biological role, probable toxic component of a putative type VII toxin-antitoxin (TA) system, probably an RNase. Probably neutralized by cognate antitoxin MJ0128. Neutralization may be due to AMPylation by MJ0128. The protein is Putative RNase MJ0127 of Methanocaldococcus jannaschii (strain ATCC 43067 / DSM 2661 / JAL-1 / JCM 10045 / NBRC 100440) (Methanococcus jannaschii).